The sequence spans 247 residues: ATP synthase subunit a, chloroplastic (247 aa).

A run of 5 helical transmembrane segments spans residues Q38–V58, V95–L115, I134–A154, L199–L219, and G220–G240.

Belongs to the ATPase A chain family. F-type ATPases have 2 components, CF(1) - the catalytic core - and CF(0) - the membrane proton channel. CF(1) has five subunits: alpha(3), beta(3), gamma(1), delta(1), epsilon(1). CF(0) has four main subunits: a, b, b' and c.

Its subcellular location is the plastid. It localises to the chloroplast thylakoid membrane. In terms of biological role, key component of the proton channel; it plays a direct role in the translocation of protons across the membrane. This chain is ATP synthase subunit a, chloroplastic, found in Trachelium caeruleum (Blue throatwort).